We begin with the raw amino-acid sequence, 202 residues long: Probable nicotinate-nucleotide adenylyltransferase (202 aa).

This sequence belongs to the NadD family.

It catalyses the reaction nicotinate beta-D-ribonucleotide + ATP + H(+) = deamido-NAD(+) + diphosphate. It participates in cofactor biosynthesis; NAD(+) biosynthesis; deamido-NAD(+) from nicotinate D-ribonucleotide: step 1/1. In terms of biological role, catalyzes the reversible adenylation of nicotinate mononucleotide (NaMN) to nicotinic acid adenine dinucleotide (NaAD). The chain is Probable nicotinate-nucleotide adenylyltransferase from Bacteroides thetaiotaomicron (strain ATCC 29148 / DSM 2079 / JCM 5827 / CCUG 10774 / NCTC 10582 / VPI-5482 / E50).